The following is an 890-amino-acid chain: MDSNTAPLGPSCPQPPPAPQPQARSRLNATASLEQERSERPRAPGPQAGPGPGVRDAAAPAEPQAQHTRSRERADGTGPTKGDMEIPFEEVLERAKAGDPKAQTEVGKHYLQLAGDTDEELNSCTAVDWLVLAAKQGRREAVKLLRRCLADRRGITSENEREVRQLSSETDLERAVRKAALVMYWKLNPKKKKQVAVAELLENVGQVNEHDGGAQPGPVPKSLQKQRRMLERLVSSESKNYIALDDFVEITKKYAKGVIPSSLFLQDDEDDDELAGKSPEDLPLRLKVVKYPLHAIMEIKEYLIDMASRAGMHWLSTIIPTHHINALIFFFIVSNLTIDFFAFFIPLVIFYLSFISMVICTLKVFQDSKAWENFRTLTDLLLRFEPNLDVEQAEVNFGWNHLEPYAHFLLSVFFVIFSFPIASKDCIPCSELAVITGFFTVTSYLSLSTHAEPYTRRALATEVTAGLLSLLPSMPLNWPYLKVLGQTFITVPVGHLVVLNVSVPCLLYVYLLYLFFRMAQLRNFKGTYCYLVPYLVCFMWCELSVVILLESTGLGLLRASIGYFLFLFALPILVAGLALVGVLQFARWFTSLELTKIAVTVAVCSVPLLLRWWTKASFSVVGMVKSLTRSSMVKLILVWLTAIVLFCWFYVYRSEGMKVYNSTLTWQQYGALCGPRAWKETNMARTQILCSHLEGHRVTWTGRFKYVRVTDIDNSAESAINMLPFFIGDWMRCLYGEAYPACSPGNTSTAEEELCRLKLLAKHPCHIKKFDRYKFEITVGMPFSSGADGSRSREEDDVTKDIVLRASSEFKSVLLSLRQGSLIEFSTILEGRLGSKWPVFELKAISCLNCMAQLSPTRRHVKIEHDWRSTVHGAVKFAFDFFFFPFLSAA.

Residue Met-1 is modified to N-acetylmethionine. Residues 1–86 (MDSNTAPLGP…TGPTKGDMEI (86 aa)) are disordered. Positions 1–321 (MDSNTAPLGP…MHWLSTIIPT (321 aa)) are interaction with ATP6V1A. A compositionally biased stretch (pro residues) spans 10–20 (PSCPQPPPAPQ). The residue at position 30 (Thr-30) is a Phosphothreonine; by FAM20C. The residue at position 32 (Ser-32) is a Phosphoserine; by FAM20C. Ser-157 is subject to Phosphoserine. 10 helical membrane-spanning segments follow: residues 314–334 (WLSTIIPTHHINALIFFFIVS), 340–360 (FFAFFIPLVIFYLSFISMVIC), 402–422 (LEPYAHFLLSVFFVIFSFPIA), 427–447 (IPCSELAVITGFFTVTSYLSL), 465–485 (AGLLSLLPSMPLNWPYLKVLG), 496–516 (LVVLNVSVPCLLYVYLLYLFF), 529–549 (CYLVPYLVCFMWCELSVVILL), 563–583 (YFLFLFALPILVAGLALVGVL), 589–609 (FTSLELTKIAVTVAVCSVPLL), and 632–652 (MVKLILVWLTAIVLFCWFYVY). Residues 653–869 (RSEGMKVYNS…HVKIEHDWRS (217 aa)) are Lumenal-facing. N-linked (GlcNAc...) asparagine glycans are attached at residues Asn-661 and Asn-746. The helical transmembrane segment at 870–890 (TVHGAVKFAFDFFFFPFLSAA) threads the bilayer.

In terms of assembly, interacts with ATP6V1A. As to expression, highly expressed in heart followed by brain, placenta, lung and pancreas. Weakly expressed in liver, kidney and skeletal muscle. Also expressed in islet and beta-cell insulinoma cell line.

The protein localises to the endoplasmic reticulum membrane. It is found in the cytoplasmic vesicle. Its subcellular location is the secretory vesicle. Participates in the regulation of cellular Ca(2+) homeostasis, at least partly, by modulating the filling state of the endoplasmic reticulum Ca(2+) store. Negatively regulates the ER stress response and positively regulates the stability of V-ATPase subunits ATP6V1A and ATP1B1 by preventing their degradation through an unknown proteasome-independent mechanism. This chain is Wolframin (WFS1), found in Homo sapiens (Human).